The chain runs to 376 residues: Tetraacyldisaccharide 4'-kinase (376 aa).

Residue 51–58 (AVGGTGKT) participates in ATP binding.

It belongs to the LpxK family.

It carries out the reaction a lipid A disaccharide + ATP = a lipid IVA + ADP + H(+). Its pathway is glycolipid biosynthesis; lipid IV(A) biosynthesis; lipid IV(A) from (3R)-3-hydroxytetradecanoyl-[acyl-carrier-protein] and UDP-N-acetyl-alpha-D-glucosamine: step 6/6. In terms of biological role, transfers the gamma-phosphate of ATP to the 4'-position of a tetraacyldisaccharide 1-phosphate intermediate (termed DS-1-P) to form tetraacyldisaccharide 1,4'-bis-phosphate (lipid IVA). The sequence is that of Tetraacyldisaccharide 4'-kinase from Bacteroides fragilis (strain ATCC 25285 / DSM 2151 / CCUG 4856 / JCM 11019 / LMG 10263 / NCTC 9343 / Onslow / VPI 2553 / EN-2).